Consider the following 208-residue polypeptide: FMN-dependent NADH:quinone oxidoreductase 4 (208 aa).

This sequence belongs to the azoreductase type 1 family. In terms of assembly, homodimer. FMN is required as a cofactor.

The enzyme catalyses 2 a quinone + NADH + H(+) = 2 a 1,4-benzosemiquinone + NAD(+). It catalyses the reaction N,N-dimethyl-1,4-phenylenediamine + anthranilate + 2 NAD(+) = 2-(4-dimethylaminophenyl)diazenylbenzoate + 2 NADH + 2 H(+). In terms of biological role, quinone reductase that provides resistance to thiol-specific stress caused by electrophilic quinones. Also exhibits azoreductase activity. Catalyzes the reductive cleavage of the azo bond in aromatic azo compounds to the corresponding amines. This Bacillus anthracis protein is FMN-dependent NADH:quinone oxidoreductase 4.